The following is a 693-amino-acid chain: Elongation factor G (693 aa).

The 275-residue stretch at 8 to 282 (KNTRNIGIMA…AVIDYLPSPL (275 aa)) folds into the tr-type G domain. GTP-binding positions include 17–24 (AHIDAGKT), 81–85 (DTPGH), and 135–138 (NKMD).

The protein belongs to the TRAFAC class translation factor GTPase superfamily. Classic translation factor GTPase family. EF-G/EF-2 subfamily.

It localises to the cytoplasm. Catalyzes the GTP-dependent ribosomal translocation step during translation elongation. During this step, the ribosome changes from the pre-translocational (PRE) to the post-translocational (POST) state as the newly formed A-site-bound peptidyl-tRNA and P-site-bound deacylated tRNA move to the P and E sites, respectively. Catalyzes the coordinated movement of the two tRNA molecules, the mRNA and conformational changes in the ribosome. The protein is Elongation factor G of Staphylococcus intermedius.